Here is a 653-residue protein sequence, read N- to C-terminus: Transmembrane and coiled-coil domains protein 1 (653 aa).

An N-acetylmethionine modification is found at Met-1. 4 disordered regions span residues 1–35 (MEPS…QKLS), 58–78 (HQRR…ADPE), 112–165 (PPKM…APTS), and 204–227 (TSSA…TPDP). Over 1–591 (MEPSGSEQLF…ARNLLGKLIN (591 aa)) the chain is Cytoplasmic. The span at 20-34 (QDAEARKQTESEQKL) shows a compositional bias: basic and acidic residues. Residues 64 to 74 (SVSPHDVQQIQ) show a composition bias toward polar residues. Residues 113-125 (PKMKRGTSLHSRR) are compositionally biased toward basic residues. The segment covering 135–144 (PQINRKSGQE) has biased composition (polar residues). The span at 153 to 165 (RPRSSSTTDAPTS) shows a compositional bias: low complexity. Residues 204 to 218 (TSSAVASSTDGSIHT) are compositionally biased toward polar residues. Positions 228–313 (QRTKAAIAHL…RKLREVEQNG (86 aa)) form a coiled coil. Residues Ser-382 and Ser-414 each carry the phosphoserine modification. Residues 415-437 (PKYGSEEDCSSATSGSVGANSTT) are disordered. Over residues 424 to 437 (SSATSGSVGANSTT) the composition is skewed to polar residues. Residues 458–576 (GFDALLHEIQ…QQQQVVQLEG (119 aa)) adopt a coiled-coil conformation. Transmembrane regions (helical) follow at residues 592 to 612 (ILLA…NCVV) and 625 to 645 (LFLV…FSYV). The Cytoplasmic segment spans residues 646-653 (ERFFSSPR).

The protein belongs to the TEX28 family. May form homodimers and heterodimers with TMCC2 or TMCC3 via the coiled-coil domains. Interacts with ribosomal proteins RPL4 and RPS6.

It localises to the endoplasmic reticulum membrane. In terms of biological role, endoplasmic reticulum membrane protein that promotes endoplasmic reticulum-associated endosome fission. Localizes to contact sites between the endoplasmic reticulum and endosomes and acts by promoting recruitment of the endoplasmic reticulum to endosome tubules for fission. Endosome membrane fission of early and late endosomes is essential to separate regions destined for lysosomal degradation from carriers to be recycled to the plasma membrane. In Homo sapiens (Human), this protein is Transmembrane and coiled-coil domains protein 1.